The following is a 238-amino-acid chain: MKISILTLFPEMFSIFNHSIIGRAQENKIIELEVLNIRDNTLDKHKKVDDYPYGGGAGMVMAPQPIVDTIRKAKENNKGKVVFLGPRGKTFNQKMAMDLSKEENLIFLCGHYEGIDQRVYKHIDMEVSLGDFILTGGEMAAIPVIDSILRLIPGVLGKEESFMDESFSEDLLEYPQYTRPYEFEGECVPEILLSGHHENIRKWRRLQSLNLTENRRPDLYKNVILTKEDKKLLGRKNK.

Residues Gly-110 and 129–134 contribute to the S-adenosyl-L-methionine site; that span reads LGDFIL.

It belongs to the RNA methyltransferase TrmD family. In terms of assembly, homodimer.

It localises to the cytoplasm. The catalysed reaction is guanosine(37) in tRNA + S-adenosyl-L-methionine = N(1)-methylguanosine(37) in tRNA + S-adenosyl-L-homocysteine + H(+). Its function is as follows. Specifically methylates guanosine-37 in various tRNAs. The polypeptide is tRNA (guanine-N(1)-)-methyltransferase (Clostridium botulinum (strain Alaska E43 / Type E3)).